A 941-amino-acid chain; its full sequence is Protocadherin alpha-12 (941 aa).

Positions 1–29 (MVIIGPRGPGSQRLLLSLLLLAAWEVGSG) are cleaved as a signal peptide. Cadherin domains are found at residues 30 to 133 (QLHY…PPVF), 134 to 242 (RERE…GPAF), 243 to 350 (DKPS…VPEV), 351 to 455 (MVTS…APAF), 456 to 565 (AQPE…APAL), and 581 to 678 (VPRS…APKT). Residues 30–697 (QLHYSVYEEA…DPEAALVDIN (668 aa)) lie on the Extracellular side of the membrane. N-linked (GlcNAc...) asparagine glycosylation is found at Asn257 and Asn265. Asn548 carries an N-linked (GlcNAc...) asparagine glycan. A helical transmembrane segment spans residues 698 to 718 (VYLIIAICAVSSLLVLTLLLY). The Cytoplasmic segment spans residues 719–941 (TALRCSAPPT…GNSTTDNSDQ (223 aa)). PXXP repeat units lie at residues 734–737 (PGKP), 790–793 (PRQP), 823–826 (PGGP), 863–866 (GPGN), and 882–885 (PGSP). Positions 734–885 (PGKPTLVCSS…PDKFIIPGSP (152 aa)) are 5 X 4 AA repeats of P-X-X-P. The disordered stretch occupies residues 818-941 (ILRAGPGGPD…GNSTTDNSDQ (124 aa)). Residues 900 to 914 (DKSDFITFGKKEETK) show a composition bias toward basic and acidic residues.

Its subcellular location is the cell membrane. In terms of biological role, potential calcium-dependent cell-adhesion protein. May be involved in the establishment and maintenance of specific neuronal connections in the brain. This is Protocadherin alpha-12 (PCDHA12) from Pan troglodytes (Chimpanzee).